The sequence spans 567 residues: Proline--tRNA ligase (567 aa).

This sequence belongs to the class-II aminoacyl-tRNA synthetase family. ProS type 1 subfamily. Homodimer.

The protein resides in the cytoplasm. It catalyses the reaction tRNA(Pro) + L-proline + ATP = L-prolyl-tRNA(Pro) + AMP + diphosphate. Its function is as follows. Catalyzes the attachment of proline to tRNA(Pro) in a two-step reaction: proline is first activated by ATP to form Pro-AMP and then transferred to the acceptor end of tRNA(Pro). As ProRS can inadvertently accommodate and process non-cognate amino acids such as alanine and cysteine, to avoid such errors it has two additional distinct editing activities against alanine. One activity is designated as 'pretransfer' editing and involves the tRNA(Pro)-independent hydrolysis of activated Ala-AMP. The other activity is designated 'posttransfer' editing and involves deacylation of mischarged Ala-tRNA(Pro). The misacylated Cys-tRNA(Pro) is not edited by ProRS. The chain is Proline--tRNA ligase from Staphylococcus aureus (strain Mu3 / ATCC 700698).